Reading from the N-terminus, the 335-residue chain is Glycerol-3-phosphate dehydrogenase [NAD(P)+] (335 aa).

NADPH-binding residues include Ser12, Trp13, and Lys107. Residues Lys107, Gly138, and Ser140 each coordinate sn-glycerol 3-phosphate. Ala142 contributes to the NADPH binding site. The sn-glycerol 3-phosphate site is built by Lys193, Asp246, Ser256, Arg257, and Asn258. Lys193 functions as the Proton acceptor in the catalytic mechanism. An NADPH-binding site is contributed by Arg257. Residues Val281 and Glu283 each contribute to the NADPH site.

Belongs to the NAD-dependent glycerol-3-phosphate dehydrogenase family.

It localises to the cytoplasm. The catalysed reaction is sn-glycerol 3-phosphate + NAD(+) = dihydroxyacetone phosphate + NADH + H(+). It carries out the reaction sn-glycerol 3-phosphate + NADP(+) = dihydroxyacetone phosphate + NADPH + H(+). It participates in membrane lipid metabolism; glycerophospholipid metabolism. Catalyzes the reduction of the glycolytic intermediate dihydroxyacetone phosphate (DHAP) to sn-glycerol 3-phosphate (G3P), the key precursor for phospholipid synthesis. This chain is Glycerol-3-phosphate dehydrogenase [NAD(P)+], found in Geobacter metallireducens (strain ATCC 53774 / DSM 7210 / GS-15).